The chain runs to 913 residues: MTTGSVLPLLLLGLSGALRAHREDLTVREACKAGFSEEGYTALISPNVLEGEKLLKVEFSSCVGTKGMQYETNSLDFKVGADGTVFATRELKIPSEQVAFTVTARERQSAEQWAAMVRLLVAQTSSAHSEHKKGQTVALDPSQPPNDTLLPWPQHQSSGGLRRQKRDWVIPPINVPENSRGPFPQQLVRIRSDKDNDIPIRYSITGVGADQPPMEVFNIDSMSGRMYVTRPMDREERASYHLRAHAVDMNGNKVENPIDLYIYVIDMNDNRPEFINQVYNGSVDEGSKPGTYVMTVTANDADDSTTANGMVRYRIVTQTPQSPSQNMFTINSETGDIVTVAAGLDREKVQQYTVIVQATDMEGNLNYGLSNTATAIITVTDVNDNPPEFTTSTFAGEVPENRIETVVANLTVMDRDQPHSPNWNAVYRIISGDPSGHFSVRTDPVTNEGMVTVVKAVDYELNRAFMLTVMVSNQAPLASGIQMSFQSTAGVTISVTDVNEAPYFPSNHKLIRLEEGVPAGTALTTFSAVDPDRFMQQAVRYSKLSDPANWLHINTSNGQITTAAILDRESLYTKNNVYEATFLAADNGIPPASGTGTLQIYLIDINDNAPQLLPKEAQICERPGLNAINITAADADMDPNIGPYVFELPFIPTTVRKNWTITRLNGDYAQLSLRILYLEAGVYDVPIIVTDSGNPPLSNTSVIKVKVCPCDENGDCTTVGAVAAAGLGTGAIVAILICIVILLIMVLLFVVWMKRREKERHTKQLLIDPEDDVRDNILKYDEEGGGEEDQDYDLSQLQQPEAMEHVLSKTPGVRRVDERPVGAEPQYPVRPVVPHPGDIGDFINEGLRAADNDPTAPPYDSLLVFDYEGSGSTAGSVSSLNSSSSGDQDYDYLNDWGPRFKKLADMYGGGEED.

An N-terminal signal peptide occupies residues 1–20 (MTTGSVLPLLLLGLSGALRA). Residues 21 to 166 (HREDLTVREA…SSGGLRRQKR (146 aa)) constitute a propeptide that is removed on maturation. A glycan (N-linked (GlcNAc...) asparagine) is linked at Asn-146. Cadherin domains are found at residues 167–274 (DWVI…RPEF), 275–389 (INQV…PPEF), 390–504 (TTST…APYF), 505–610 (PSNH…DNAP), and 611–721 (QLLP…TVGA). Residues 167 to 731 (DWVIPPINVP…VAAAGLGTGA (565 aa)) lie on the Extracellular side of the membrane. Asn-280, Asn-409, Asn-554, Asn-629, Asn-658, and Asn-699 each carry an N-linked (GlcNAc...) asparagine glycan. The chain crosses the membrane as a helical span at residues 732–753 (IVAILICIVILLIMVLLFVVWM). The Cytoplasmic segment spans residues 754 to 913 (KRREKERHTK…ADMYGGGEED (160 aa)).

Distributed widely in mouse tissues with high levels present in brain, skeletal muscle and thymus.

The protein resides in the cell membrane. Functionally, cadherins are calcium-dependent cell adhesion proteins. They preferentially interact with themselves in a homophilic manner in connecting cells; cadherins may thus contribute to the sorting of heterogeneous cell types. May play an important role in retinal development. The protein is Cadherin-4 (Cdh4) of Mus musculus (Mouse).